A 427-amino-acid polypeptide reads, in one-letter code: Ribosome biogenesis protein WDR12 homolog (427 aa).

The interval 13–97 (LQLHLYTKQK…EDTVELEYVE (85 aa)) is ubiquitin-like (UBL) domain. WD repeat units follow at residues 109–146 (LHDD…KLTI), 148–190 (GHIA…NSVE), 197–236 (GHER…DGDS), 260–298 (GHRE…IKSE), 301–339 (GHKS…GTIV), 345–385 (GHTQ…APIF), and 389–427 (GHED…GEQK).

Belongs to the WD repeat WDR12/YTM1 family.

The protein resides in the nucleus. Its subcellular location is the nucleolus. It is found in the nucleoplasm. Required for maturation of ribosomal RNAs and formation of the large ribosomal subunit. This Aedes aegypti (Yellowfever mosquito) protein is Ribosome biogenesis protein WDR12 homolog.